The following is a 72-amino-acid chain: Defensin-like protein 35 (72 aa).

Positions 1-22 (MASNKISFSFVLCLYMCSLLDA) are cleaved as a signal peptide. Disulfide bonds link cysteine 32/cysteine 58, cysteine 44/cysteine 67, and cysteine 48/cysteine 69.

It belongs to the DEFL family.

Its subcellular location is the secreted. This Arabidopsis thaliana (Mouse-ear cress) protein is Defensin-like protein 35.